The chain runs to 288 residues: Hemin import ATP-binding protein HmuV (288 aa).

The ABC transporter domain maps to Leu31–Pro269. An ATP-binding site is contributed by Gly68–Ser75.

This sequence belongs to the ABC transporter superfamily. Heme (hemin) importer (TC 3.A.1.14.5) family. As to quaternary structure, the complex is composed of two ATP-binding proteins (HmuV), two transmembrane proteins (HmuU) and a solute-binding protein (HmuT).

The protein localises to the cell membrane. Functionally, part of the ABC transporter complex HmuTUV involved in hemin import. Responsible for energy coupling to the transport system. This chain is Hemin import ATP-binding protein HmuV, found in Nocardia farcinica (strain IFM 10152).